The chain runs to 576 residues: Putative export ATP-binding/permease protein RP696 (576 aa).

One can recognise an ABC transmembrane type-1 domain in the interval 20-303 (LIIVMISLLS…IFELLSEMHL (284 aa)). Helical transmembrane passes span 21 to 41 (IIVMISLLSVSASLLLIGSIF), 61 to 81 (ILYICLLIVILSVASFFRSYF), 135 to 155 (FLSFFIRNSVMLIGSITLMFF), 158 to 178 (FKLASIVIITIPILLVPLIKF), 242 to 262 (ALFFAISIAVIFLTITLIVWI), and 277 to 297 (IISFIYYAIIAGVSSGGIFEL). The ABC transporter domain occupies 336-572 (IEFKNVDFTY…SEIYRNICRE (237 aa)). 371–378 (GRSGAGKS) provides a ligand contact to ATP.

Belongs to the ABC transporter superfamily. As to quaternary structure, homodimer.

The protein resides in the cell inner membrane. Part of an ABC transporter complex. Transmembrane domains (TMD) form a pore in the inner membrane and the ATP-binding domain (NBD) is responsible for energy generation. In Rickettsia prowazekii (strain Madrid E), this protein is Putative export ATP-binding/permease protein RP696.